The following is a 358-amino-acid chain: MTHSPESNPTVSAAEAAELIRSLLHKEGTWVDWGKKCQQLQKAGYGAEEIFEQSGFQKVQQNLVIVASQVYESLVKQGIDETVLSYYRGPKSDVLYELRILNHQQRAIAAVEAQQKNLAADEAKELAKAFQEFGYLSQLPEGFTDHPGDALAYQCWKLARQKKNLPERTRLIVKGLKFAHSPNARQAIEKLLTDLTAQPSRKAPLVPVFRLEEDQEAARLIPVAGTFPLQPQAVQAVQSLEQVEPFGLVSYQGEGAVVPVPQWQAILTAEDPVAIFCPAGQVSESLARKDEQVLVVVDRSKKIWNDGSYFLLNQGETVAIQWCETEPEREILAQVVLVLRPKKIFDANNLREPWQMDD.

Residues 11 to 194 (VSAAEAAELI…RQAIEKLLTD (184 aa)) form an N-terminal alpha-helix region. The tract at residues 218–344 (ARLIPVAGTF…VVLVLRPKKI (127 aa)) is C-terminal beta-sheet.

It belongs to the RAF family. Homodimer. Forms an RbcL(8)-Raf1(8) complex. Forms complexes of many stoichiometries with RbcL with and without RbcS. RbcX and Raf1 can bind simultaneously to RbcL. Interacts with both RuBisCO subunits (ccbL, ccbS), GroEL, DnaK and alpha and beta phycocyanin (cpcA, cpcB) in pull-down experiments with tagged protein. C-terminally tagged Raf1 does not interact with either RuBisCO subunit, suggesting its C-terminus is involved in binding.

The protein resides in the cytoplasm. Its function is as follows. A major RuBisCO chaperone. Acts after GroEL-GroES chaperonin to fold and/or assemble the large subunit of RuBisCO (ccbL, rbcL). Cooperates with RbcX in RbcL folding, plays the major role in assembly of dimers into RbcL(8)-Raf1(8) intermediate complexes. RbcS replaces Raf1, leading to holoenzyme formation. In terms of biological role, required for optimal reconstitution of RbcL(8) upon expression in E.coli. Has been suggested to be involved in RuBisCO recycling and homeostasis rather than assembly. This Synechocystis sp. (strain ATCC 27184 / PCC 6803 / Kazusa) protein is RuBisCO accumulation factor 1.